A 159-amino-acid chain; its full sequence is uncharacterized protein (159 aa).

2 disordered regions span residues 1 to 23 (MEQD…KGQA) and 91 to 110 (AGGG…GPAA).

This is an uncharacterized protein from Homo sapiens (Human).